The following is a 295-amino-acid chain: Sulfotransferase 1 family member D1 (295 aa).

48-53 (KSGTTW) provides a ligand contact to 3'-phosphoadenylyl sulfate. Residues Phe81 and 106–108 (KTH) each bind substrate. The active-site Proton acceptor is His108. 2 residues coordinate 3'-phosphoadenylyl sulfate: Arg130 and Ser138. Residue Phe142 participates in substrate binding. 3'-phosphoadenylyl sulfate contacts are provided by residues Tyr193, Ser227, and 257–259 (RKG).

It belongs to the sulfotransferase 1 family.

It is found in the cytoplasm. In terms of biological role, sulfotransferase with broad substrate specificity that utilizes 3'-phospho-5'-adenylyl sulfate (PAPS) as sulfonate donor to catalyze the sulfate conjugation of catecholamines, such as dopamine, prostaglandins, leukotriene E4, drugs and xenobiotic compounds. Has sulfotransferase activity towards p-nitrophenol, 2-naphthylamine and minoxidil (in vitro). Sulfonation increases the water solubility of most compounds, and therefore their renal excretion, but it can also result in bioactivation to form active metabolites. This is Sulfotransferase 1 family member D1 (Sult1d1) from Rattus norvegicus (Rat).